The chain runs to 246 residues: Triosephosphate isomerase (246 aa).

9-11 (NWK) contributes to the substrate binding site. Histidine 95 (electrophile) is an active-site residue. The active-site Proton acceptor is the glutamate 165. Substrate is bound by residues glycine 171, serine 210, and 231-232 (GG).

It belongs to the triosephosphate isomerase family. As to quaternary structure, homodimer.

It localises to the cytoplasm. The catalysed reaction is D-glyceraldehyde 3-phosphate = dihydroxyacetone phosphate. Its pathway is carbohydrate biosynthesis; gluconeogenesis. It functions in the pathway carbohydrate degradation; glycolysis; D-glyceraldehyde 3-phosphate from glycerone phosphate: step 1/1. Functionally, involved in the gluconeogenesis. Catalyzes stereospecifically the conversion of dihydroxyacetone phosphate (DHAP) to D-glyceraldehyde-3-phosphate (G3P). The protein is Triosephosphate isomerase of Thermodesulfovibrio yellowstonii (strain ATCC 51303 / DSM 11347 / YP87).